We begin with the raw amino-acid sequence, 245 residues long: 1-(5-phosphoribosyl)-5-[(5-phosphoribosylamino)methylideneamino] imidazole-4-carboxamide isomerase (245 aa).

Aspartate 13 (proton acceptor) is an active-site residue. Catalysis depends on aspartate 132, which acts as the Proton donor.

The protein belongs to the HisA/HisF family.

It is found in the cytoplasm. It catalyses the reaction 1-(5-phospho-beta-D-ribosyl)-5-[(5-phospho-beta-D-ribosylamino)methylideneamino]imidazole-4-carboxamide = 5-[(5-phospho-1-deoxy-D-ribulos-1-ylimino)methylamino]-1-(5-phospho-beta-D-ribosyl)imidazole-4-carboxamide. Its pathway is amino-acid biosynthesis; L-histidine biosynthesis; L-histidine from 5-phospho-alpha-D-ribose 1-diphosphate: step 4/9. This chain is 1-(5-phosphoribosyl)-5-[(5-phosphoribosylamino)methylideneamino] imidazole-4-carboxamide isomerase, found in Frankia alni (strain DSM 45986 / CECT 9034 / ACN14a).